Consider the following 325-residue polypeptide: 5-dehydro-2-deoxygluconokinase (325 aa).

Belongs to the carbohydrate kinase PfkB family.

The enzyme catalyses 5-dehydro-2-deoxy-D-gluconate + ATP = 6-phospho-5-dehydro-2-deoxy-D-gluconate + ADP + H(+). It participates in polyol metabolism; myo-inositol degradation into acetyl-CoA; acetyl-CoA from myo-inositol: step 5/7. Catalyzes the phosphorylation of 5-dehydro-2-deoxy-D-gluconate (2-deoxy-5-keto-D-gluconate or DKG) to 6-phospho-5-dehydro-2-deoxy-D-gluconate (DKGP). The protein is 5-dehydro-2-deoxygluconokinase of Bacillus licheniformis (strain ATCC 14580 / DSM 13 / JCM 2505 / CCUG 7422 / NBRC 12200 / NCIMB 9375 / NCTC 10341 / NRRL NRS-1264 / Gibson 46).